We begin with the raw amino-acid sequence, 402 residues long: Flagellar hook protein FlgE (402 aa).

The protein belongs to the flagella basal body rod proteins family.

Its subcellular location is the bacterial flagellum basal body. The protein is Flagellar hook protein FlgE (flgE) of Escherichia coli (strain K12).